A 124-amino-acid chain; its full sequence is Cytoinsectotoxin-4 (124 aa).

Positions 1–19 (MKCFILAAALVLAFACIAA) are cleaved as a signal peptide. Residues 20–62 (SEPAETENEDLDDLSDLEDEEWLDELEEAAEYLESLREFEESR) constitute a propeptide that is removed on maturation. Position 123 is a phenylalanine amide (phenylalanine 123).

This sequence belongs to the cationic peptide 06 (cytoinsectotoxin) family. In terms of tissue distribution, expressed by the venom gland.

The protein localises to the secreted. Functionally, insecticidal and antimicrobial peptide. Has insecticidal activity against larvae of flesh fly S.carnaria. Has antibacterial activity against Gram-positive bacterium B.subtilis B-501 (MIC=2.5 uM) and Gram-negative bacterium E.coli DH5alpha (MIC=10 uM). The chain is Cytoinsectotoxin-4 from Lachesana tarabaevi (Spider).